The following is a 586-amino-acid chain: Exopolysaccharide phosphotransferase SCO6023 (586 aa).

The protein belongs to the stealth family.

This chain is Exopolysaccharide phosphotransferase SCO6023, found in Streptomyces coelicolor (strain ATCC BAA-471 / A3(2) / M145).